Reading from the N-terminus, the 353-residue chain is Virulence plasmid protein pGP2-D (353 aa).

The sequence is that of Virulence plasmid protein pGP2-D from Chlamydia muridarum (strain MoPn / Nigg).